We begin with the raw amino-acid sequence, 395 residues long: Allantoicase (395 aa).

The protein belongs to the allantoicase family.

It carries out the reaction allantoate + H2O = (S)-ureidoglycolate + urea. It participates in nitrogen metabolism; (S)-allantoin degradation; (S)-ureidoglycolate from allantoate (aminidohydrolase route): step 1/1. Functionally, utilization of purines as secondary nitrogen sources, when primary sources are limiting. This is Allantoicase (allc) from Danio rerio (Zebrafish).